The primary structure comprises 537 residues: Synaptotagmin-2 (537 aa).

At 1-2 (MG) the chain is on the cytoplasmic side. Residues 3–23 (IISTILGVIGFGFGTTIGIVI) form a helical membrane-spanning segment. The Lumenal segment spans residues 24 to 537 (GYYLFIYFQS…QIELQWRNSS (514 aa)). The region spanning 67-249 (DFDRIDWLNK…WPKTLNVQIM (183 aa)) is the SMP-LTD domain. The segment at 227 to 505 (QEIIKDQVAN…TLGYVVINLG (279 aa)) is phospholipid binding. C2 domains follow at residues 240 to 362 (WPKT…LMTL) and 402 to 517 (DPNA…NDKY). 4 residues coordinate Ca(2+): Asp-276, Asp-282, Asp-332, and Glu-334.

It belongs to the synaptotagmin family. The cofactor is Ca(2+).

Its subcellular location is the golgi apparatus membrane. Its function is as follows. May play an important role in regulating an unconventional protein trafficking from the cytosol to the extracellular matrix. The chain is Synaptotagmin-2 (SYT2) from Arabidopsis thaliana (Mouse-ear cress).